A 270-amino-acid polypeptide reads, in one-letter code: uncharacterized protein (270 aa).

An N-terminal signal peptide occupies residues 1-23; that stretch reads MKKLLIILAATLVLVLGSSGNFR.

This is an uncharacterized protein from Archaeoglobus fulgidus (strain ATCC 49558 / DSM 4304 / JCM 9628 / NBRC 100126 / VC-16).